The chain runs to 373 residues: Dual-specificity RNA methyltransferase RlmN (373 aa).

Glu-94 acts as the Proton acceptor in catalysis. Residues 100-339 (EDDRATLCVS…VIVRKTRGDD (240 aa)) form the Radical SAM core domain. A disulfide bridge links Cys-107 with Cys-344. Positions 114, 118, and 121 each coordinate [4Fe-4S] cluster. S-adenosyl-L-methionine-binding positions include 168-169 (GE), Ser-200, 222-224 (SIH), and Asn-301. Cys-344 (S-methylcysteine intermediate) is an active-site residue.

This sequence belongs to the radical SAM superfamily. RlmN family. It depends on [4Fe-4S] cluster as a cofactor.

It localises to the cytoplasm. The enzyme catalyses adenosine(2503) in 23S rRNA + 2 reduced [2Fe-2S]-[ferredoxin] + 2 S-adenosyl-L-methionine = 2-methyladenosine(2503) in 23S rRNA + 5'-deoxyadenosine + L-methionine + 2 oxidized [2Fe-2S]-[ferredoxin] + S-adenosyl-L-homocysteine. The catalysed reaction is adenosine(37) in tRNA + 2 reduced [2Fe-2S]-[ferredoxin] + 2 S-adenosyl-L-methionine = 2-methyladenosine(37) in tRNA + 5'-deoxyadenosine + L-methionine + 2 oxidized [2Fe-2S]-[ferredoxin] + S-adenosyl-L-homocysteine. In terms of biological role, specifically methylates position 2 of adenine 2503 in 23S rRNA and position 2 of adenine 37 in tRNAs. m2A2503 modification seems to play a crucial role in the proofreading step occurring at the peptidyl transferase center and thus would serve to optimize ribosomal fidelity. The chain is Dual-specificity RNA methyltransferase RlmN from Shewanella baltica (strain OS185).